We begin with the raw amino-acid sequence, 246 residues long: MTQTFADQKRKTVETAEFTEDGRYKRKVRSFVLRTGRLSEFQRNMMNDNWGTLGLDYQTEPFDFAKIYGNDNPVVLEIGFGMGKSLVDMAFANPDKNYLGIEVHTPGVGACIAYAVEKGVTNLRVICHDATEILRDSIADGTLGGLQLFFPDPWHKAKHHKRRIVQPHFVTQVIQKLSENGFIHMATDWENYAEQMLEVLSANTDLVNTSKNGNYIPRPDFRPLTKFEARGHKLGHGVWDLYFVKK.

Residues E77, E102, D129, and D152 each coordinate S-adenosyl-L-methionine. Residue D152 is part of the active site. Residues K156, D188, and T225–E228 contribute to the substrate site.

Belongs to the class I-like SAM-binding methyltransferase superfamily. TrmB family.

It carries out the reaction guanosine(46) in tRNA + S-adenosyl-L-methionine = N(7)-methylguanosine(46) in tRNA + S-adenosyl-L-homocysteine. The protein operates within tRNA modification; N(7)-methylguanine-tRNA biosynthesis. Catalyzes the formation of N(7)-methylguanine at position 46 (m7G46) in tRNA. In Haemophilus influenzae (strain PittGG), this protein is tRNA (guanine-N(7)-)-methyltransferase.